We begin with the raw amino-acid sequence, 101 residues long: Small ribosomal subunit protein uS10 (101 aa).

The protein belongs to the universal ribosomal protein uS10 family. In terms of assembly, part of the 30S ribosomal subunit.

Involved in the binding of tRNA to the ribosomes. This chain is Small ribosomal subunit protein uS10, found in Porphyromonas gingivalis (strain ATCC 33277 / DSM 20709 / CIP 103683 / JCM 12257 / NCTC 11834 / 2561).